The sequence spans 215 residues: Pyrrolidone-carboxylate peptidase (215 aa).

Residues Glu-80, Cys-143, and His-167 contribute to the active site.

Belongs to the peptidase C15 family. In terms of assembly, homotetramer.

The protein localises to the cytoplasm. It catalyses the reaction Release of an N-terminal pyroglutamyl group from a polypeptide, the second amino acid generally not being Pro.. Functionally, removes 5-oxoproline from various penultimate amino acid residues except L-proline. The chain is Pyrrolidone-carboxylate peptidase from Brevibacillus brevis (strain 47 / JCM 6285 / NBRC 100599).